A 207-amino-acid polypeptide reads, in one-letter code: Large ribosomal subunit protein uL4 (207 aa).

Belongs to the universal ribosomal protein uL4 family. Part of the 50S ribosomal subunit.

Its function is as follows. One of the primary rRNA binding proteins, this protein initially binds near the 5'-end of the 23S rRNA. It is important during the early stages of 50S assembly. It makes multiple contacts with different domains of the 23S rRNA in the assembled 50S subunit and ribosome. In terms of biological role, forms part of the polypeptide exit tunnel. The protein is Large ribosomal subunit protein uL4 of Erythrobacter litoralis (strain HTCC2594).